A 267-amino-acid polypeptide reads, in one-letter code: Hemin import ATP-binding protein HmuV (267 aa).

The 241-residue stretch at 3–243 (LEVRGIEVWR…ELVARVFGLR (241 aa)) folds into the ABC transporter domain. 35-42 (GPNGAGKS) provides a ligand contact to ATP.

The protein belongs to the ABC transporter superfamily. Heme (hemin) importer (TC 3.A.1.14.5) family. As to quaternary structure, the complex is composed of two ATP-binding proteins (HmuV), two transmembrane proteins (HmuU) and a solute-binding protein (HmuT).

It localises to the cell inner membrane. Its function is as follows. Part of the ABC transporter complex HmuTUV involved in hemin import. Responsible for energy coupling to the transport system. The polypeptide is Hemin import ATP-binding protein HmuV (Myxococcus xanthus (strain DK1622)).